A 303-amino-acid polypeptide reads, in one-letter code: Quinolinate synthase (303 aa).

Iminosuccinate-binding residues include histidine 24 and serine 41. Cysteine 86 serves as a coordination point for [4Fe-4S] cluster. Iminosuccinate-binding positions include 112-114 and serine 129; that span reads YVN. Cysteine 172 is a binding site for [4Fe-4S] cluster. Iminosuccinate contacts are provided by residues 198 to 200 and threonine 215; that span reads HPE. A [4Fe-4S] cluster-binding site is contributed by cysteine 260.

This sequence belongs to the quinolinate synthase family. Type 2 subfamily. [4Fe-4S] cluster is required as a cofactor.

The protein localises to the cytoplasm. It carries out the reaction iminosuccinate + dihydroxyacetone phosphate = quinolinate + phosphate + 2 H2O + H(+). It participates in cofactor biosynthesis; NAD(+) biosynthesis; quinolinate from iminoaspartate: step 1/1. Functionally, catalyzes the condensation of iminoaspartate with dihydroxyacetone phosphate to form quinolinate. In Alkaliphilus metalliredigens (strain QYMF), this protein is Quinolinate synthase.